Reading from the N-terminus, the 536-residue chain is MSKFVFVTGGVVSSIGKGIVAASLGRLLKSRGYSVSILKLDPYLNVDPGTMSPFQHGEVFVTEDGAETDLDLGHYERFTDTAMTRLNSVTTGSIYQAVINKERRGSYNGGTVQVIPHITGEIRERIHRVAANSNADIIITEIGGTVGDIESLPFLEAIREFKNDVNRNDVAYIHVTLLPYIKTSGEIKTKPTQHSVKELRSIGIQPDLLVCRSDKSINEALKKKLSGFCGVSINSVIEALDADSIYSVPLSLKKEGLCKETLNYLELEDKKCDLKNWEQLIHNLRNPGGPIKVALVGKYIELGDAYLSVVEALRHACIEQKALLDLHWVSAEMIEKNSAETYLNEVDAIVVPGGFGNRGVNGKIAAIKFARENKIPFLGLCLGMQCAVIEWARNVAHLPDASSSELDPNTPNPVIHLLPEQQDVVDLGGTMRLGVYPCRLTKNTTGKNLYDEDVIYERHRHRYEFNNYYKQSFLDSGYKISGTSPDGRLVELIELENHPYFLACQYHPEFLSRPGKPHPLFKGLIKASQDKLTQSN.

Positions 1-267 (MSKFVFVTGG…CKETLNYLEL (267 aa)) are amidoligase domain. Residue Ser13 participates in CTP binding. A UTP-binding site is contributed by Ser13. Residues 14–19 (SIGKGI) and Asp71 contribute to the ATP site. Positions 71 and 141 each coordinate Mg(2+). CTP-binding positions include 148 to 150 (DIE), 188 to 193 (KTKPTQ), and Lys224. UTP contacts are provided by residues 188-193 (KTKPTQ) and Lys224. Positions 292–534 (KVALVGKYIE…IKASQDKLTQ (243 aa)) constitute a Glutamine amidotransferase type-1 domain. Gly354 serves as a coordination point for L-glutamine. The active-site Nucleophile; for glutamine hydrolysis is the Cys381. L-glutamine contacts are provided by residues 382–385 (LGMQ), Glu405, and Arg462. Residues His507 and Glu509 contribute to the active site.

It belongs to the CTP synthase family. Homotetramer.

It catalyses the reaction UTP + L-glutamine + ATP + H2O = CTP + L-glutamate + ADP + phosphate + 2 H(+). The enzyme catalyses L-glutamine + H2O = L-glutamate + NH4(+). It carries out the reaction UTP + NH4(+) + ATP = CTP + ADP + phosphate + 2 H(+). It participates in pyrimidine metabolism; CTP biosynthesis via de novo pathway; CTP from UDP: step 2/2. Its activity is regulated as follows. Allosterically activated by GTP, when glutamine is the substrate; GTP has no effect on the reaction when ammonia is the substrate. The allosteric effector GTP functions by stabilizing the protein conformation that binds the tetrahedral intermediate(s) formed during glutamine hydrolysis. Inhibited by the product CTP, via allosteric rather than competitive inhibition. In terms of biological role, catalyzes the ATP-dependent amination of UTP to CTP with either L-glutamine or ammonia as the source of nitrogen. Regulates intracellular CTP levels through interactions with the four ribonucleotide triphosphates. This chain is CTP synthase, found in Prochlorococcus marinus (strain MIT 9301).